The sequence spans 402 residues: uncharacterized protein (402 aa).

Helical transmembrane passes span 26-46, 67-87, 96-116, 126-146, 168-188, 213-233, 235-255, 289-309, 312-332, 338-358, 360-380, and 381-401; these read IFMS…AIAY, VALA…YVGF, FAAF…LTII, TVSI…NGTL, LFIL…IGFL, YVAY…MIDS, LFLL…GGYG, PIVI…GSII, ISVF…FDSL, FKNI…AVTI, FALL…SFLL, and LYKK…GYLI.

The protein belongs to the chromate ion transporter (CHR) (TC 2.A.51) family.

It localises to the cell membrane. This is an uncharacterized protein from Methanocaldococcus jannaschii (strain ATCC 43067 / DSM 2661 / JAL-1 / JCM 10045 / NBRC 100440) (Methanococcus jannaschii).